Reading from the N-terminus, the 504-residue chain is Probable cytochrome P450 513F1 (504 aa).

Residues 1–21 form a helical membrane-spanning segment; that stretch reads MILSLLFLFVITLYFLIPSRI. A heme-binding site is contributed by Cys449.

The protein belongs to the cytochrome P450 family. Heme is required as a cofactor.

It localises to the membrane. The protein is Probable cytochrome P450 513F1 (cyp513F1) of Dictyostelium discoideum (Social amoeba).